The following is a 347-amino-acid chain: Protein RecA (347 aa).

67–74 contributes to the ATP binding site; the sequence is GPESSGKT. The tract at residues 326-347 is disordered; that stretch reads DKLLPGRAPSSEAQGTESGQEA. Polar residues predominate over residues 336–347; that stretch reads SEAQGTESGQEA.

The protein belongs to the RecA family.

It is found in the cytoplasm. Can catalyze the hydrolysis of ATP in the presence of single-stranded DNA, the ATP-dependent uptake of single-stranded DNA by duplex DNA, and the ATP-dependent hybridization of homologous single-stranded DNAs. It interacts with LexA causing its activation and leading to its autocatalytic cleavage. In Alkalilimnicola ehrlichii (strain ATCC BAA-1101 / DSM 17681 / MLHE-1), this protein is Protein RecA.